The primary structure comprises 331 residues: Aspartate carbamoyltransferase catalytic subunit (331 aa).

Residues Arg-66 and Thr-67 each coordinate carbamoyl phosphate. Lys-94 is an L-aspartate binding site. Carbamoyl phosphate-binding residues include Arg-116, His-149, and Gln-152. Positions 189 and 243 each coordinate L-aspartate. Residues Gly-284 and Pro-285 each coordinate carbamoyl phosphate.

Belongs to the aspartate/ornithine carbamoyltransferase superfamily. ATCase family. As to quaternary structure, heterododecamer (2C3:3R2) of six catalytic PyrB chains organized as two trimers (C3), and six regulatory PyrI chains organized as three dimers (R2).

The enzyme catalyses carbamoyl phosphate + L-aspartate = N-carbamoyl-L-aspartate + phosphate + H(+). It participates in pyrimidine metabolism; UMP biosynthesis via de novo pathway; (S)-dihydroorotate from bicarbonate: step 2/3. Catalyzes the condensation of carbamoyl phosphate and aspartate to form carbamoyl aspartate and inorganic phosphate, the committed step in the de novo pyrimidine nucleotide biosynthesis pathway. This is Aspartate carbamoyltransferase catalytic subunit from Thermosynechococcus vestitus (strain NIES-2133 / IAM M-273 / BP-1).